A 319-amino-acid chain; its full sequence is Aminoimidazole riboside kinase (319 aa).

5-amino-1-(beta-D-ribosyl)imidazole is bound by residues Asp-16, Gly-31, and Tyr-101. 158-160 (DVN) contacts ATP. Arg-162 lines the 5-amino-1-(beta-D-ribosyl)imidazole pocket. Ala-180, Ala-181, and Ala-183 together coordinate K(+). Positions 187 and 192 each coordinate ATP. Gly-213 lines the K(+) pocket. Residue 220 to 225 (SLGADG) coordinates ATP. K(+) contacts are provided by Asp-246 and Thr-248. 5-amino-1-(beta-D-ribosyl)imidazole is bound at residue Asp-252. Asp-252 (proton acceptor) is an active-site residue. Asn-281 is a binding site for ATP. Residues Ala-287, Ala-290, and Gly-292 each coordinate K(+).

The protein belongs to the carbohydrate kinase PfkB family. Homodimer.

It carries out the reaction 5-amino-1-(beta-D-ribosyl)imidazole + ATP = 5-amino-1-(5-phospho-beta-D-ribosyl)imidazole + ADP + H(+). Its activity is regulated as follows. Potassium may regulate kinase activity. Functionally, phosphorylates 5-amino-1-(beta-D-ribosyl)imidazole (AIRs) to form 5-amino-1-(5-phospho-beta-D-ribosyl)imidazole (AIR), an important intermediate in the purine and thiamine biosynthetic pathways. It allows the use of exogenous aminoimidazole riboside (AIRs) to satisfy the cellular requirement for purines and thiamine. This chain is Aminoimidazole riboside kinase, found in Salmonella typhimurium (strain LT2 / SGSC1412 / ATCC 700720).